Here is a 364-residue protein sequence, read N- to C-terminus: Salivary endonuclease (364 aa).

Residues 1-24 (MSSFFLSISPLVLALFHVVVQVCS) form the signal peptide. Residue Asn-285 is glycosylated (N-linked (GlcNAc...) asparagine).

It belongs to the DNA/RNA non-specific endonuclease family. Mg(2+) serves as cofactor. Saliva (at protein level). Female salivary gland.

The protein localises to the secreted. Functionally, hydrolyzes double-stranded DNA with no sequence specificity. Does not cleave ssDNA and RNA. May facilitate blood meal intake by lowering the local viscosity created by the release of host DNA. The protein is Salivary endonuclease of Culex quinquefasciatus (Southern house mosquito).